The following is an 880-amino-acid chain: Pentatricopeptide repeat-containing protein At3g07290, mitochondrial (880 aa).

Residues 1 to 89 (MLLIHIRSTR…RSDNDICVRF (89 aa)) constitute a mitochondrion transit peptide. PPR repeat units lie at residues 159-193 (NYPC…GFVV), 194-228 (GMID…GFVL), 229-259 (DSHI…MSKE), 265-299 (NSVS…GCQP), 300-334 (STRT…GCKP), 335-369 (NVHT…RIFP), 370-404 (SVIT…ACKP), 405-439 (NVRT…GLSP), 440-474 (DIVS…DIEP), 475-509 (DCLT…GISL), 510-544 (DEVT…RILT), 545-579 (TPHS…GLVP), 580-614 (SVVT…GCLP), 615-649 (NVYP…GVSP), 650-684 (NHVT…GYEL), 685-721 (NDRI…ETDP), 738-768 (ISGL…VLER), 772-806 (LEKA…GFVP), and 807-842 (SFKS…GVVE).

It belongs to the PPR family. P subfamily.

The protein resides in the mitochondrion. In Arabidopsis thaliana (Mouse-ear cress), this protein is Pentatricopeptide repeat-containing protein At3g07290, mitochondrial.